We begin with the raw amino-acid sequence, 374 residues long: Probable trehalose-phosphate phosphatase 9 (374 aa).

This sequence belongs to the trehalose phosphatase family. Requires a divalent metal cation as cofactor.

The catalysed reaction is alpha,alpha-trehalose 6-phosphate + H2O = alpha,alpha-trehalose + phosphate. The protein operates within glycan biosynthesis; trehalose biosynthesis. Functionally, removes the phosphate from trehalose 6-phosphate to produce free trehalose. Trehalose accumulation in plant may improve abiotic stress tolerance. The sequence is that of Probable trehalose-phosphate phosphatase 9 (TPP9) from Oryza sativa subsp. japonica (Rice).